We begin with the raw amino-acid sequence, 110 residues long: Iron-sulfur cluster assembly protein CyaY (110 aa).

The protein belongs to the frataxin family.

Functionally, involved in iron-sulfur (Fe-S) cluster assembly. May act as a regulator of Fe-S biogenesis. The sequence is that of Iron-sulfur cluster assembly protein CyaY from Pseudomonas syringae pv. tomato (strain ATCC BAA-871 / DC3000).